Here is a 221-residue protein sequence, read N- to C-terminus: ATP-dependent dethiobiotin synthetase BioD (221 aa).

13–18 contacts ATP; sequence DIGKTY. Position 17 (T17) interacts with Mg(2+). K38 is an active-site residue. S42 provides a ligand contact to substrate. Residues D51, 112–115, and 176–177 each bind ATP; these read EGSG and NR. 2 residues coordinate Mg(2+): D51 and E112.

It belongs to the dethiobiotin synthetase family. In terms of assembly, homodimer. Mg(2+) serves as cofactor.

It is found in the cytoplasm. The catalysed reaction is (7R,8S)-7,8-diammoniononanoate + CO2 + ATP = (4R,5S)-dethiobiotin + ADP + phosphate + 3 H(+). It functions in the pathway cofactor biosynthesis; biotin biosynthesis; biotin from 7,8-diaminononanoate: step 1/2. Its function is as follows. Catalyzes a mechanistically unusual reaction, the ATP-dependent insertion of CO2 between the N7 and N8 nitrogen atoms of 7,8-diaminopelargonic acid (DAPA, also called 7,8-diammoniononanoate) to form a ureido ring. In Brachyspira hyodysenteriae (strain ATCC 49526 / WA1), this protein is ATP-dependent dethiobiotin synthetase BioD.